The chain runs to 599 residues: Sulfite reductase [NADPH] flavoprotein alpha-component (599 aa).

The region spanning 64–202 is the Flavodoxin-like domain; it reads ITIISASQTG…AASEWRARVV (139 aa). Residues 70–75, 117–120, and 153–162 contribute to the FMN site; these read SQTGNA, STQG, and LGDSSYEFFC. Residues 234–448 form the FAD-binding FR-type domain; that stretch reads DAPLVASLSV…IEHNDNFRLP (215 aa). Residues threonine 322, alanine 356, 386–389, 404–406, tyrosine 410, and 419–422 each bind FAD; these read RLYS, TVG, and GGAS. Residues 519 to 520, 525 to 529, and aspartate 561 each bind NADP(+); these read SR and KVYVQ. Tyrosine 599 serves as a coordination point for FAD.

This sequence belongs to the NADPH-dependent sulphite reductase flavoprotein subunit CysJ family. It in the N-terminal section; belongs to the flavodoxin family. In the C-terminal section; belongs to the flavoprotein pyridine nucleotide cytochrome reductase family. In terms of assembly, alpha(8)-beta(8). The alpha component is a flavoprotein, the beta component is a hemoprotein. FAD is required as a cofactor. FMN serves as cofactor.

It catalyses the reaction hydrogen sulfide + 3 NADP(+) + 3 H2O = sulfite + 3 NADPH + 4 H(+). The protein operates within sulfur metabolism; hydrogen sulfide biosynthesis; hydrogen sulfide from sulfite (NADPH route): step 1/1. In terms of biological role, component of the sulfite reductase complex that catalyzes the 6-electron reduction of sulfite to sulfide. This is one of several activities required for the biosynthesis of L-cysteine from sulfate. The flavoprotein component catalyzes the electron flow from NADPH -&gt; FAD -&gt; FMN to the hemoprotein component. The chain is Sulfite reductase [NADPH] flavoprotein alpha-component from Escherichia coli (strain K12).